Reading from the N-terminus, the 508-residue chain is Photosystem II CP47 reaction center protein (508 aa).

6 consecutive transmembrane segments (helical) span residues 21–36, 101–115, 140–156, 203–218, 237–252, and 457–472; these read AVHLMHTSLVSGWAGS, IILSGLLFMAAIWHW, GIHLLLSGILCFGFGAF, IAAGILGIIAGLFHLS, VLSSSIAAVFWAAFVV, and IFALLFFFGHIWHGAR.

It belongs to the PsbB/PsbC family. PsbB subfamily. As to quaternary structure, PSII is composed of 1 copy each of membrane proteins PsbA, PsbB, PsbC, PsbD, PsbE, PsbF, PsbH, PsbI, PsbJ, PsbK, PsbL, PsbM, PsbT, PsbY, PsbZ, Psb30/Ycf12, at least 3 peripheral proteins of the oxygen-evolving complex and a large number of cofactors. It forms dimeric complexes. Requires Binds multiple chlorophylls. PSII binds additional chlorophylls, carotenoids and specific lipids. as cofactor.

It is found in the plastid. The protein resides in the chloroplast thylakoid membrane. Its function is as follows. One of the components of the core complex of photosystem II (PSII). It binds chlorophyll and helps catalyze the primary light-induced photochemical processes of PSII. PSII is a light-driven water:plastoquinone oxidoreductase, using light energy to abstract electrons from H(2)O, generating O(2) and a proton gradient subsequently used for ATP formation. This chain is Photosystem II CP47 reaction center protein, found in Bigelowiella natans (Pedinomonas minutissima).